A 250-amino-acid polypeptide reads, in one-letter code: Small ribosomal subunit protein uS2 (250 aa).

The protein belongs to the universal ribosomal protein uS2 family.

The chain is Small ribosomal subunit protein uS2 from Delftia acidovorans (strain DSM 14801 / SPH-1).